The following is a 72-amino-acid chain: MSAIFNFQSLLTVILLLICTCAYIRSLAPSILDRNKTGLLGIFWKCARIGERKSPYVAICCIVMAFSILFIQ.

A signal peptide spans 1–26 (MSAIFNFQSLLTVILLLICTCAYIRS). The Extracellular segment spans residues 27 to 53 (LAPSILDRNKTGLLGIFWKCARIGERK). N35 carries an N-linked (GlcNAc...) asparagine glycan. Residues 54–71 (SPYVAICCIVMAFSILFI) traverse the membrane as a helical segment. Q72 is a topological domain (cytoplasmic).

It belongs to the KISH family.

It localises to the golgi apparatus membrane. Involved in the early part of the secretory pathway. The polypeptide is Protein kish-A (Tmem167a) (Mus musculus (Mouse)).